Consider the following 120-residue polypeptide: Large ribosomal subunit protein uL18 (120 aa).

The protein belongs to the universal ribosomal protein uL18 family. As to quaternary structure, part of the 50S ribosomal subunit; part of the 5S rRNA/L5/L18/L25 subcomplex. Contacts the 5S and 23S rRNAs.

Functionally, this is one of the proteins that bind and probably mediate the attachment of the 5S RNA into the large ribosomal subunit, where it forms part of the central protuberance. The sequence is that of Large ribosomal subunit protein uL18 from Brucella anthropi (strain ATCC 49188 / DSM 6882 / CCUG 24695 / JCM 21032 / LMG 3331 / NBRC 15819 / NCTC 12168 / Alc 37) (Ochrobactrum anthropi).